A 402-amino-acid polypeptide reads, in one-letter code: Type II NADH:quinone oxidoreductase (402 aa).

Residues 12 to 16 (GAGYA), 39 to 40 (NK), and valine 83 each bind FAD. Residue glutamate 172 is part of the active site. Residues aspartate 302, 319-320 (AQ), and lysine 379 each bind FAD.

The protein belongs to the NADH dehydrogenase family. Requires FAD as cofactor.

The protein localises to the cell membrane. It carries out the reaction a quinone + NADH + H(+) = a quinol + NAD(+). Its function is as follows. Alternative, nonproton pumping NADH:quinone oxidoreductase that delivers electrons to the respiratory chain by oxidation of NADH and reduction of quinones, and contributes to the regeneration of NAD(+). This chain is Type II NADH:quinone oxidoreductase, found in Staphylococcus aureus (strain bovine RF122 / ET3-1).